The primary structure comprises 424 residues: Enolase (424 aa).

Gln162 provides a ligand contact to (2R)-2-phosphoglycerate. Glu204 acts as the Proton donor in catalysis. 3 residues coordinate Mg(2+): Asp241, Glu284, and Asp311. (2R)-2-phosphoglycerate-binding residues include Lys336, Arg365, Ser366, and Lys387. Lys336 functions as the Proton acceptor in the catalytic mechanism.

It belongs to the enolase family. Mg(2+) serves as cofactor.

It localises to the cytoplasm. The protein resides in the secreted. Its subcellular location is the cell surface. It catalyses the reaction (2R)-2-phosphoglycerate = phosphoenolpyruvate + H2O. It functions in the pathway carbohydrate degradation; glycolysis; pyruvate from D-glyceraldehyde 3-phosphate: step 4/5. Functionally, catalyzes the reversible conversion of 2-phosphoglycerate (2-PG) into phosphoenolpyruvate (PEP). It is essential for the degradation of carbohydrates via glycolysis. The protein is Enolase of Rhizobium leguminosarum bv. trifolii (strain WSM2304).